A 552-amino-acid polypeptide reads, in one-letter code: Leucine-rich repeat-containing protein 56 (552 aa).

LRR repeat units lie at residues 94–115, 117–138, 139–160, 161–182, and 186–206; these read NLIQ…GTSL, HLQV…GSFL, ELKE…CLLE, QLEV…RYLQ, and RLAM…PGPS. Disordered stretches follow at residues 348 to 375 and 401 to 435; these read APLE…AESC and QQER…PPRL.

This sequence belongs to the LRRC56 family. Interacts with IFT88.

It is found in the cell projection. The protein localises to the cilium. Functionally, required for the assembly of dynein arms. In Mus musculus (Mouse), this protein is Leucine-rich repeat-containing protein 56 (Lrrc56).